The sequence spans 390 residues: MAAGRGERAGQSAEGPKQYRLIGAEAVLARTLRAFTDCPLIGTIAVVIHPDDHALYRRAVPEKHENVILVTGGPTRQESTRLGLLALKDEAPQYVLIHDGVRPFIGQDLLERIIANLTPDNGVLPALAVSDTLKRAAADGMVETTISRTGLFAAQTPQAFPYAPILDAHEKAFAINRTDFTDDAAIAEWQEIAVRIIEGSADNTKLTWAKDIEMADKRLRQDHAVFPDIRTGNGYDVHSFEPGDHVTLCGVKIPHEAKLNGHSDADVALHALTDALLATRGAGDIGTHFPPSDPQWKGAASRIFIEHAAKIVREAGGRIANVDVTLISEAPKIGPHRAAMTQALCDMLGIAADRVSIKATTNEKLGFVGRREGIAAIATATVIYPGEVPE.

Positions 1-229 (MAAGRGERAG…RQDHAVFPDI (229 aa)) are 2-C-methyl-D-erythritol 4-phosphate cytidylyltransferase. The segment at 230–390 (RTGNGYDVHS…TVIYPGEVPE (161 aa)) is 2-C-methyl-D-erythritol 2,4-cyclodiphosphate synthase. Residues Asp236 and His238 each coordinate a divalent metal cation. Residues 236–238 (DVH) and 262–263 (HS) contribute to the 4-CDP-2-C-methyl-D-erythritol 2-phosphate site. His270 contacts a divalent metal cation. Residues 284-286 (DIG), 360-363 (TTNE), Phe367, and Arg370 contribute to the 4-CDP-2-C-methyl-D-erythritol 2-phosphate site.

It in the N-terminal section; belongs to the IspD/TarI cytidylyltransferase family. IspD subfamily. In the C-terminal section; belongs to the IspF family. It depends on a divalent metal cation as a cofactor.

It carries out the reaction 2-C-methyl-D-erythritol 4-phosphate + CTP + H(+) = 4-CDP-2-C-methyl-D-erythritol + diphosphate. The enzyme catalyses 4-CDP-2-C-methyl-D-erythritol 2-phosphate = 2-C-methyl-D-erythritol 2,4-cyclic diphosphate + CMP. Its pathway is isoprenoid biosynthesis; isopentenyl diphosphate biosynthesis via DXP pathway; isopentenyl diphosphate from 1-deoxy-D-xylulose 5-phosphate: step 2/6. The protein operates within isoprenoid biosynthesis; isopentenyl diphosphate biosynthesis via DXP pathway; isopentenyl diphosphate from 1-deoxy-D-xylulose 5-phosphate: step 4/6. Functionally, bifunctional enzyme that catalyzes the formation of 4-diphosphocytidyl-2-C-methyl-D-erythritol from CTP and 2-C-methyl-D-erythritol 4-phosphate (MEP) (IspD), and catalyzes the conversion of 4-diphosphocytidyl-2-C-methyl-D-erythritol 2-phosphate (CDP-ME2P) to 2-C-methyl-D-erythritol 2,4-cyclodiphosphate (ME-CPP) with a corresponding release of cytidine 5-monophosphate (CMP) (IspF). The protein is Bifunctional enzyme IspD/IspF of Brucella abortus biovar 1 (strain 9-941).